The primary structure comprises 214 residues: Inner membrane-spanning protein YciB (214 aa).

5 consecutive transmembrane segments (helical) span residues 11-31 (ILFFIAFKLYGIYVATAVAII), 50-70 (MHIITLALIVILGGATLILQD), 81-101 (VNWGFALVFLGSHFIGQKPII), 119-139 (LSYMWIAFFIFSGIANIYVAY), and 149-169 (FKLFGLMGLTLAFILIQGVYI).

The protein belongs to the YciB family.

It localises to the cell inner membrane. Its function is as follows. Plays a role in cell envelope biogenesis, maintenance of cell envelope integrity and membrane homeostasis. The chain is Inner membrane-spanning protein YciB from Hydrogenovibrio crunogenus (strain DSM 25203 / XCL-2) (Thiomicrospira crunogena).